Here is a 320-residue protein sequence, read N- to C-terminus: TATA box-binding protein-like 2 (320 aa).

This sequence belongs to the TBP family. In terms of tissue distribution, expression is restricted to the gonads, and is higher in the ovary than the testis.

It localises to the nucleus. TATA box-binding transcription factor. Members of the TBP family are differentially required to regulate transcription and development during early embryogenesis. Required for gastrulation. Regulates a large subset of genes that are ventrally expressed. Binds to a subset of promoters. The chain is TATA box-binding protein-like 2 from Xenopus laevis (African clawed frog).